The sequence spans 502 residues: Tryptophan decarboxylase TDC1 (502 aa).

The span at 1-18 (MGSLDSNYDTESPASVGQ) shows a compositional bias: polar residues. The disordered stretch occupies residues 1 to 21 (MGSLDSNYDTESPASVGQFNP). An N6-(pyridoxal phosphate)lysine modification is found at Lys319.

It belongs to the group II decarboxylase family. Pyridoxal 5'-phosphate serves as cofactor. As to expression, highly expressed in apex. Expressed in young stem and bark tissues. Expressed at low levels in leaves, fruits and seeds.

It catalyses the reaction L-tryptophan + H(+) = tryptamine + CO2. Involved in the biosynthesis of tryptamine. Supplies tryptamine for the indole moiety of camptothecin (CPT), an anti-cancer monoterpene alkaloid. Represents a key step in monoterpene indole alkaloid biosynthesis. Is specific for tryptophan, and inactive against tyrosine, phenylalanine and 3,4-dihydroxyphenylalanine (dopa). This Camptotheca acuminata (Happy tree) protein is Tryptophan decarboxylase TDC1.